The following is a 384-amino-acid chain: Chaperone protein DnaJ (384 aa).

The J domain occupies 5 to 69 (DYYKVLGVDR…QKRAQYDQFG (65 aa)). Residues 141 to 223 (GKKTQVSYTR…CGGKGTVERK (83 aa)) form a CR-type zinc finger. 8 residues coordinate Zn(2+): Cys-154, Cys-157, Cys-171, Cys-174, Cys-197, Cys-200, Cys-211, and Cys-214. CXXCXGXG motif repeat units follow at residues 154 to 161 (CETCGGNG), 171 to 178 (CDKCHGTG), 197 to 204 (CDKCNGRG), and 211 to 218 (CKTCGGKG).

It belongs to the DnaJ family. As to quaternary structure, homodimer. It depends on Zn(2+) as a cofactor.

Its subcellular location is the cytoplasm. In terms of biological role, participates actively in the response to hyperosmotic and heat shock by preventing the aggregation of stress-denatured proteins and by disaggregating proteins, also in an autonomous, DnaK-independent fashion. Unfolded proteins bind initially to DnaJ; upon interaction with the DnaJ-bound protein, DnaK hydrolyzes its bound ATP, resulting in the formation of a stable complex. GrpE releases ADP from DnaK; ATP binding to DnaK triggers the release of the substrate protein, thus completing the reaction cycle. Several rounds of ATP-dependent interactions between DnaJ, DnaK and GrpE are required for fully efficient folding. Also involved, together with DnaK and GrpE, in the DNA replication of plasmids through activation of initiation proteins. The polypeptide is Chaperone protein DnaJ (Lactobacillus acidophilus (strain ATCC 700396 / NCK56 / N2 / NCFM)).